A 342-amino-acid polypeptide reads, in one-letter code: MLKDQNLDIERKQDHIEINLTKNVESTLKSGFESIHFIHNALPEINYDSVNTTTTFLGKSLQAPILISSMTGGTTRARDINYRLAQVAQKAGIAMGLGSMRVLLTEPDTIKTFAVRHIAPDIPLLANIGAVQLNYGVTPKECQYLVDAIKADALILHLNVLQELTQPEGNRNWEKLLPKIREVVNYLSIPVIVKEVGYGLSKKVAESLIDAGVKVLDIAGSGGTSWSQVEAYRATNSLQNRIASSFINWGIPTLDSLKMVREVSKDIPIITSGGFKSGIDGAKAIRIGANIFGLAGQFLKAADTSESLLSEEIQLIIEQLKITMLCTGSRTLKDLAKAEIRL.

11-12 is a binding site for substrate; that stretch reads RK. Residues Ser68, 69-71, Ser99, and Asn127 each bind FMN; that span reads SMT. Residue 99–101 coordinates substrate; sequence SMR. Gln162 serves as a coordination point for substrate. Glu163 lines the Mg(2+) pocket. FMN contacts are provided by residues Lys194, Thr224, 274 to 276, and 295 to 296; these read GFK and AG.

It belongs to the IPP isomerase type 2 family. Homooctamer. Dimer of tetramers. Requires FMN as cofactor. It depends on NADPH as a cofactor. Mg(2+) serves as cofactor.

The protein resides in the cytoplasm. The catalysed reaction is isopentenyl diphosphate = dimethylallyl diphosphate. In terms of biological role, involved in the biosynthesis of isoprenoids. Catalyzes the 1,3-allylic rearrangement of the homoallylic substrate isopentenyl (IPP) to its allylic isomer, dimethylallyl diphosphate (DMAPP). The chain is Isopentenyl-diphosphate delta-isomerase from Rickettsia conorii (strain ATCC VR-613 / Malish 7).